Here is a 189-residue protein sequence, read N- to C-terminus: GTP cyclohydrolase 1 (189 aa).

Zn(2+) contacts are provided by cysteine 76, histidine 79, and cysteine 149.

Belongs to the GTP cyclohydrolase I family. In terms of assembly, toroid-shaped homodecamer, composed of two pentamers of five dimers.

It carries out the reaction GTP + H2O = 7,8-dihydroneopterin 3'-triphosphate + formate + H(+). It functions in the pathway cofactor biosynthesis; 7,8-dihydroneopterin triphosphate biosynthesis; 7,8-dihydroneopterin triphosphate from GTP: step 1/1. The sequence is that of GTP cyclohydrolase 1 from Dehalococcoides mccartyi (strain ATCC BAA-2266 / KCTC 15142 / 195) (Dehalococcoides ethenogenes (strain 195)).